The chain runs to 436 residues: MNNDPDSEAVTITIDKTEIEKLVNLLTKGRLSSYRLTQTVTQMLDEKLNTGNGGYVSLNRREVTSMSMMRTKLEQLQRTTNKNALLGRMVFLSIANSEFVSEPNQEYMTSMIALLDKKANGIGTELFRVVRDMSPAEIGLKGAGQNYKSATISLESKAPIRQMMQNQYQDKVIDEAIDIIDGFCSSDLAIQPLCQTKILQSLAQYKYLVNEFGTTMPTYSDGTKDITVKEESAITEAEWKALDLDKPLLEQDFSYAKTTRTDIVITPWSNHTGIEFKSEETYIGRNSGIEIDGVRLKLKLGGLKKIWTSVKNFFQTNKPMIKVLLHEGLKIAKPYLSPVSKKSCRECYRIPRNWTSSIYFNNSGDGTIAKDSKATVLKILPQLARLGKLNLSTNEISTDNTRVGLSDYNDEAISQIKVLGRAMDMSPTTIIRFNKR.

This is an uncharacterized protein from Diadromus pulchellus (Parasitic wasp).